We begin with the raw amino-acid sequence, 126 residues long: Glycine cleavage system H protein (126 aa).

Positions 22–104 constitute a Lipoyl-binding domain; that stretch reads KLRIGITDFA…YEKAWMIVIE (83 aa). Position 63 is an N6-lipoyllysine (Lys63).

Belongs to the GcvH family. The glycine cleavage system is composed of four proteins: P, T, L and H. (R)-lipoate is required as a cofactor.

Functionally, the glycine cleavage system catalyzes the degradation of glycine. The H protein shuttles the methylamine group of glycine from the P protein to the T protein. Its function is as follows. Is also involved in protein lipoylation via its role as an octanoyl/lipoyl carrier protein intermediate. The chain is Glycine cleavage system H protein from Oceanobacillus iheyensis (strain DSM 14371 / CIP 107618 / JCM 11309 / KCTC 3954 / HTE831).